Consider the following 130-residue polypeptide: Guanylate kinase (130 aa).

Residues 1-130 (KIFEDPTTSY…EKIQSRVNEA (130 aa)) enclose the Guanylate kinase-like domain.

It belongs to the guanylate kinase family.

It localises to the cytoplasm. The catalysed reaction is GMP + ATP = GDP + ADP. Essential for recycling GMP and indirectly, cGMP. The protein is Guanylate kinase (gmk) of Staphylococcus epidermidis.